Here is a 309-residue protein sequence, read N- to C-terminus: Glutaminase (309 aa).

The substrate site is built by S64, N114, E160, N167, Y191, Y243, and V261.

It belongs to the glutaminase family. As to quaternary structure, homotetramer.

The enzyme catalyses L-glutamine + H2O = L-glutamate + NH4(+). The polypeptide is Glutaminase (Methylobacterium radiotolerans (strain ATCC 27329 / DSM 1819 / JCM 2831 / NBRC 15690 / NCIMB 10815 / 0-1)).